The following is a 352-amino-acid chain: UDP-N-acetylglucosamine--N-acetylmuramyl-(pentapeptide) pyrophosphoryl-undecaprenol N-acetylglucosamine transferase (352 aa).

UDP-N-acetyl-alpha-D-glucosamine-binding positions include threonine 14–glycine 16, asparagine 124, arginine 164, serine 185, and glutamine 285.

It belongs to the glycosyltransferase 28 family. MurG subfamily.

It localises to the cell inner membrane. The catalysed reaction is di-trans,octa-cis-undecaprenyl diphospho-N-acetyl-alpha-D-muramoyl-L-alanyl-D-glutamyl-meso-2,6-diaminopimeloyl-D-alanyl-D-alanine + UDP-N-acetyl-alpha-D-glucosamine = di-trans,octa-cis-undecaprenyl diphospho-[N-acetyl-alpha-D-glucosaminyl-(1-&gt;4)]-N-acetyl-alpha-D-muramoyl-L-alanyl-D-glutamyl-meso-2,6-diaminopimeloyl-D-alanyl-D-alanine + UDP + H(+). It functions in the pathway cell wall biogenesis; peptidoglycan biosynthesis. In terms of biological role, cell wall formation. Catalyzes the transfer of a GlcNAc subunit on undecaprenyl-pyrophosphoryl-MurNAc-pentapeptide (lipid intermediate I) to form undecaprenyl-pyrophosphoryl-MurNAc-(pentapeptide)GlcNAc (lipid intermediate II). This chain is UDP-N-acetylglucosamine--N-acetylmuramyl-(pentapeptide) pyrophosphoryl-undecaprenol N-acetylglucosamine transferase, found in Chlamydia trachomatis serovar A (strain ATCC VR-571B / DSM 19440 / HAR-13).